Consider the following 199-residue polypeptide: Peroxiredoxin-1 (199 aa).

The region spanning Ala-6–Phe-165 is the Thioredoxin domain. The active-site Cysteine sulfenic acid (-SOH) intermediate is the Cys-52.

The protein belongs to the peroxiredoxin family. AhpC/Prx1 subfamily. As to quaternary structure, homodimer; disulfide-linked, upon oxidation. 5 homodimers assemble to form a ring-like decamer. Interacts with GDPD5; forms a mixed-disulfide with GDPD5. Interacts with SESN1 and SESN2. Interacts with FAM107A. Post-translationally, the enzyme can be inactivated by further oxidation of the cysteine sulfenic acid (C(P)-SOH) to sulphinic acid (C(P)-SO2H) instead of its condensation to a disulfide bond. It can be reactivated by forming a transient disulfide bond with sulfiredoxin SRXN1, which reduces the cysteine sulfinic acid in an ATP- and Mg-dependent manner.

It localises to the cytoplasm. The enzyme catalyses a hydroperoxide + [thioredoxin]-dithiol = an alcohol + [thioredoxin]-disulfide + H2O. Its function is as follows. Thiol-specific peroxidase that catalyzes the reduction of hydrogen peroxide and organic hydroperoxides to water and alcohols, respectively. Plays a role in cell protection against oxidative stress by detoxifying peroxides and as sensor of hydrogen peroxide-mediated signaling events. Might participate in the signaling cascades of growth factors and tumor necrosis factor-alpha by regulating the intracellular concentrations of H(2)O(2). Reduces an intramolecular disulfide bond in GDPD5 that gates the ability to GDPD5 to drive postmitotic motor neuron differentiation. This chain is Peroxiredoxin-1 (PRDX1), found in Gekko japonicus (Schlegel's Japanese gecko).